Here is a 503-residue protein sequence, read N- to C-terminus: Hemogen (503 aa).

2 stretches are compositionally biased toward basic residues: residues methionine 1–leucine 10 and lysine 61–glutamine 79. The disordered stretch occupies residues methionine 1–valine 129. A necessary for nuclear localization region spans residues arginine 7–glutamate 87. Residues serine 90, serine 103, serine 124, serine 153, serine 158, serine 171, serine 213, serine 223, serine 228, serine 241, and serine 269 each carry the phosphoserine modification. Threonine 286 bears the Phosphothreonine mark. A disordered region spans residues glutamine 381–phenylalanine 503. Residues glutamine 385–glutamate 396 show a composition bias toward low complexity. Serine 387 and serine 394 each carry phosphoserine. Positions cysteine 426–leucine 436 are enriched in basic and acidic residues.

Expressed in hematopoietic precursor cells. Highly expressed in bone marrow, the red pulp of the spleen and round spermatids. Weakly expressed in peripheral blood cells.

The protein localises to the nucleus. Its function is as follows. Regulates the proliferation and differentiation of hematopoietic cells. Overexpression block the TPA-induced megakaryocytic differentiation in the K562 cell model. May also prevent cell apoptosis through the activation of the nuclear factor-kappa B (NF-kB). This is Hemogen (Hemgn) from Mus musculus (Mouse).